We begin with the raw amino-acid sequence, 423 residues long: tRNA-dihydrouridine(16/17) synthase [NAD(P)(+)] (423 aa).

The residue at position 2 (threonine 2) is an N-acetylthreonine. Residues 35 to 37 and glutamine 92 each bind FMN; that span reads PMV. Cysteine 121 functions as the Proton donor in the catalytic mechanism. FMN is bound by residues lysine 160, histidine 188, 223-225, and 247-248; these read NGN and AE. The tract at residues 404-423 is disordered; it reads KKRKADVPLESADKKKDVKA. A compositionally biased stretch (basic and acidic residues) spans 408–423; that stretch reads ADVPLESADKKKDVKA.

Belongs to the Dus family. Dus1 subfamily. As to quaternary structure, monomer. FMN serves as cofactor.

It catalyses the reaction 5,6-dihydrouridine(16) in tRNA + NADP(+) = uridine(16) in tRNA + NADPH + H(+). The catalysed reaction is 5,6-dihydrouridine(16) in tRNA + NAD(+) = uridine(16) in tRNA + NADH + H(+). It carries out the reaction 5,6-dihydrouridine(17) in tRNA + NAD(+) = uridine(17) in tRNA + NADH + H(+). The enzyme catalyses 5,6-dihydrouridine(17) in tRNA + NADP(+) = uridine(17) in tRNA + NADPH + H(+). It catalyses the reaction a 5,6-dihydrouridine in mRNA + NAD(+) = a uridine in mRNA + NADH + H(+). The catalysed reaction is a 5,6-dihydrouridine in mRNA + NADP(+) = a uridine in mRNA + NADPH + H(+). Its function is as follows. Catalyzes the synthesis of dihydrouridine, a modified base found in the D-loop of most tRNAs. Specifically modifies U16 and U17 in cytoplasmic tRNAs. Also able to mediate dihydrouridylation of some mRNAs, thereby affecting their translation. This chain is tRNA-dihydrouridine(16/17) synthase [NAD(P)(+)], found in Saccharomyces cerevisiae (strain ATCC 204508 / S288c) (Baker's yeast).